The chain runs to 91 residues: Putative septation protein SpoVG (91 aa).

Belongs to the SpoVG family.

In terms of biological role, could be involved in septation. The polypeptide is Putative septation protein SpoVG (Clostridium beijerinckii (strain ATCC 51743 / NCIMB 8052) (Clostridium acetobutylicum)).